Reading from the N-terminus, the 288-residue chain is MIPLFFIPPFIILFITKGKFRFLTKFELVLACALHYGTFILALPIFFLLYKTKQQPWNILLQTALEPVVLSAYGFTFLTALLATIINAIFGLILAWVLVRYEFPGKKLLDATVDLPFALPTSVGGLTLMTVFNDKGWIKPICSWLNIKIVFNPIGVLLAMIFVSLPFVVRTIQPVLQNMEEDLEEAAWCLGASPWTTFWHILFPPLTPSLLTGTTLGFSRALGEYGSIVLIASNIPMKDLVISVLLFQKLEQYDYKSATIIASFVLIISFTALFFINKIQLWKKTFHK.

8 consecutive transmembrane segments (helical) span residues 2–22 (IPLF…KFRF), 28–48 (LVLA…IFFL), 77–97 (FLTA…LAWV), 112–132 (TVDL…MTVF), 149–169 (IVFN…PFVV), 196–218 (TTFW…TLGF), 227–247 (SIVL…VLLF), and 257–277 (SATI…FFIN). The ABC transmembrane type-1 domain maps to 73-277 (YGFTFLTALL…ISFTALFFIN (205 aa)).

The protein belongs to the binding-protein-dependent transport system permease family. CysTW subfamily.

Its subcellular location is the plastid. The protein resides in the chloroplast membrane. Its function is as follows. Part of the ABC transporter complex cysAWTP (TC 3.A.1.6.1) involved in sulfate/thiosulfate import. Probably responsible for the translocation of the substrate across the membrane. In Marchantia polymorpha (Common liverwort), this protein is Probable sulfate transport system permease protein cysT (cysT).